Here is a 427-residue protein sequence, read N- to C-terminus: Glutamate-1-semialdehyde 2,1-aminomutase (427 aa).

At Lys-265 the chain carries N6-(pyridoxal phosphate)lysine.

The protein belongs to the class-III pyridoxal-phosphate-dependent aminotransferase family. HemL subfamily. Homodimer. It depends on pyridoxal 5'-phosphate as a cofactor.

The protein resides in the cytoplasm. It carries out the reaction (S)-4-amino-5-oxopentanoate = 5-aminolevulinate. The protein operates within porphyrin-containing compound metabolism; protoporphyrin-IX biosynthesis; 5-aminolevulinate from L-glutamyl-tRNA(Glu): step 2/2. This Idiomarina loihiensis (strain ATCC BAA-735 / DSM 15497 / L2-TR) protein is Glutamate-1-semialdehyde 2,1-aminomutase.